Consider the following 405-residue polypeptide: CCA-adding enzyme (405 aa).

G8 and R11 together coordinate ATP. CTP contacts are provided by G8 and R11. E21 and D23 together coordinate Mg(2+). Residues R91, R137, and R140 each coordinate ATP. CTP-binding residues include R91, R137, and R140. The HD domain occupies 220–326; it reads PLSHGLSTLS…LNFFDELDLW (107 aa).

It belongs to the tRNA nucleotidyltransferase/poly(A) polymerase family. Bacterial CCA-adding enzyme type 2 subfamily. Mg(2+) is required as a cofactor.

It catalyses the reaction a tRNA precursor + 2 CTP + ATP = a tRNA with a 3' CCA end + 3 diphosphate. The enzyme catalyses a tRNA with a 3' CCA end + 2 CTP + ATP = a tRNA with a 3' CCACCA end + 3 diphosphate. In terms of biological role, catalyzes the addition and repair of the essential 3'-terminal CCA sequence in tRNAs without using a nucleic acid template. Adds these three nucleotides in the order of C, C, and A to the tRNA nucleotide-73, using CTP and ATP as substrates and producing inorganic pyrophosphate. tRNA 3'-terminal CCA addition is required both for tRNA processing and repair. Also involved in tRNA surveillance by mediating tandem CCA addition to generate a CCACCA at the 3' terminus of unstable tRNAs. While stable tRNAs receive only 3'-terminal CCA, unstable tRNAs are marked with CCACCA and rapidly degraded. This chain is CCA-adding enzyme, found in Hamiltonella defensa subsp. Acyrthosiphon pisum (strain 5AT).